The primary structure comprises 255 residues: Myogenic factor 5 (255 aa).

The region spanning 83-134 is the bHLH domain; the sequence is DRRKAATMRERRRLKKVNQAFDTLKRCTTTNPNQRLPKVEILRNAIRYIESL. The segment at 217-249 is disordered; the sequence is SEQPGLPLQDPASLSPVASTDSQPATPGASSSR. Residues 232 to 249 show a composition bias toward polar residues; sequence PVASTDSQPATPGASSSR.

As to quaternary structure, efficient DNA binding requires dimerization with another bHLH protein.

It localises to the nucleus. Its function is as follows. Acts as a transcriptional activator that promotes transcription of muscle-specific target genes and plays a role in muscle differentiation. Together with MYOG and MYOD1, co-occupies muscle-specific gene promoter core region during myogenesis. Induces fibroblasts to differentiate into myoblasts. Probable sequence specific DNA-binding protein. The chain is Myogenic factor 5 (MYF5) from Bos taurus (Bovine).